The primary structure comprises 1484 residues: Chromatin remodeling regulator CECR2 (1484 aa).

Residues 170–241 form a disordered region; sequence VQGKSNGELS…RHGSQGPGQG (72 aa). The span at 197–209 shows a compositional bias: basic residues; the sequence is TGKRRGRPPKRKK. Over residues 210–222 the composition is skewed to basic and acidic residues; that stretch reads LQEEILLSEKQEE. Residues 223-234 show a composition bias toward polar residues; it reads NSLASEPQTRHG. Residue serine 422 is modified to Phosphoserine. One can recognise a Bromo domain in the interval 434-538; that stretch reads FELDDDFTAM…RCFHRAMMKH (105 aa). Threonine 546 carries the post-translational modification Phosphothreonine. Disordered stretches follow at residues 556–704, 796–825, 919–1053, 1165–1259, 1287–1320, and 1442–1484; these read EKRE…GPRL, GNHG…PRTL, GVPY…SYPG, VMGG…LFSD, AKVP…LDLD, and YRPS…LDQS. Phosphoserine is present on serine 571. The span at 605–614 shows a compositional bias: low complexity; sequence SSGDDQSSSS. Serine 1014 carries the phosphoserine modification. Arginine 1197 and arginine 1203 each carry asymmetric dimethylarginine. A compositionally biased stretch (pro residues) spans 1243 to 1254; sequence SGPPASQPPPPR. Residues 1304–1320 show a composition bias toward basic and acidic residues; it reads DESMERPESPKEFLDLD. Serine 1312 bears the Phosphoserine mark. Positions 1451 to 1469 are enriched in polar residues; sequence PVQSQASFPKTPTAATSQE. Pro residues predominate over residues 1474–1484; the sequence is HKPPTLPLDQS.

Component of the CERF-1 ISWI chromatin remodeling complex (also called the CECR2-containing remodeling factor (CERF) complex) at least composed of CECR2 and SMARCA1. Component of the CERF-5 ISWI chromatin remodeling complex at least composed of SMARCA5/SNF2H and CECR2. LUZP1 is detected as part of the CERF-1 and CERF-5 complexes in embryonic stem (ES) cells where it is involved in complex stabilization but is not detected in the complexes in the testis. Interacts with CCAR2; CCAR2 may form part of the CERF-1 and/or CEF-5 ISWI chromatin remodeling complexes in ES cells. Interacts with acetylated lysine residues on histone H2A and H3 (in vitro). Interacts with LRPPRC. As to expression, highly expressed in skeletal muscle, thymus, placenta and lung. Expressed at lower level in brain, heart, colon, spleen, kidney.

Its subcellular location is the nucleus. Functionally, regulatory subunit of the ATP-dependent CERF-1 and CERF-5 ISWI chromatin remodeling complexes, which form ordered nucleosome arrays on chromatin and facilitate access to DNA during DNA-templated processes such as DNA replication, transcription, and repair. The complexes do not have the ability to slide mononucleosomes to the center of a DNA template. The CERF-1 ISWI chromatin remodeling complex has a lower ATP hydrolysis rate than the CERF-5 ISWI chromatin remodeling complex. Plays a role in various processes during development: required during embryogenesis for neural tube closure and inner ear development. In adults, required for spermatogenesis, via the formation of ISWI-type chromatin complexes. In histone-modifying complexes, CECR2 recognizes and binds acylated histones: binds histones that are acetylated and/or butyrylated. May also be involved through its interaction with LRPPRC in the integration of cytoskeletal network with vesicular trafficking, nucleocytosolic shuttling, transcription, chromosome remodeling and cytokinesis. In Homo sapiens (Human), this protein is Chromatin remodeling regulator CECR2 (CECR2).